We begin with the raw amino-acid sequence, 149 residues long: Transcriptional regulator MraZ (149 aa).

2 consecutive SpoVT-AbrB domains span residues 7-54 (KYVN…GISH) and 83-126 (AVQL…QPQN).

The protein belongs to the MraZ family. Forms oligomers.

It is found in the cytoplasm. The protein resides in the nucleoid. The polypeptide is Transcriptional regulator MraZ (Rickettsia akari (strain Hartford)).